Consider the following 477-residue polypeptide: Proline--tRNA ligase (477 aa).

Belongs to the class-II aminoacyl-tRNA synthetase family. ProS type 3 subfamily. As to quaternary structure, homodimer.

It localises to the cytoplasm. The catalysed reaction is tRNA(Pro) + L-proline + ATP = L-prolyl-tRNA(Pro) + AMP + diphosphate. Catalyzes the attachment of proline to tRNA(Pro) in a two-step reaction: proline is first activated by ATP to form Pro-AMP and then transferred to the acceptor end of tRNA(Pro). This is Proline--tRNA ligase from Lachnoclostridium phytofermentans (strain ATCC 700394 / DSM 18823 / ISDg) (Clostridium phytofermentans).